The following is a 311-amino-acid chain: Putative protease MJ0651 (311 aa).

Catalysis depends on Ser-128, which acts as the Nucleophile. Lys-180 serves as the catalytic Proton donor/acceptor.

The protein belongs to the peptidase S49 family.

The protein is Putative protease MJ0651 of Methanocaldococcus jannaschii (strain ATCC 43067 / DSM 2661 / JAL-1 / JCM 10045 / NBRC 100440) (Methanococcus jannaschii).